The chain runs to 445 residues: MELFGTDGVRGKAGKLLSAQLSMRLAMAAGIYFRKNSRTNKIVVGKDTRRSGYMIENALVSGLTAVGYNVIQVGPMPTPAIAFLTEDLRCDAGIMISASHNPYYDNGIKFFNHQGDKLQPEDEKAIEAIFFDEQTIEENQKTDQDIGSSKRIDDVIGRYIVHLKNSFPKDLTLNGLRVVIDTANGAAYKVAPTVFSELGAEVFVINDEPNGFNINEKCGAMYPGELAKKVREYRADIGFALDGDADRLVVVDEKGKIVPGDLVIGALATYLKQEGMLQADAIVATVMSNKALEDYLATLGIELVRSNVGDKYVLDEMKKRGINFGGESSGHIIFGDYSKTGDGIVTALQITAYMLRSQKGASEILYPFSLYPSKMENVTVKEKKPLETIEEFPELQKRIEKSGIRSLIRYSGTENKLRILLEGKDQKKLEKLMEELIQFFKERLS.

Residue S99 is the Phosphoserine intermediate of the active site. 4 residues coordinate Mg(2+): S99, D242, D244, and D246. S99 is subject to Phosphoserine.

This sequence belongs to the phosphohexose mutase family. It depends on Mg(2+) as a cofactor. Activated by phosphorylation.

It carries out the reaction alpha-D-glucosamine 1-phosphate = D-glucosamine 6-phosphate. Its function is as follows. Catalyzes the conversion of glucosamine-6-phosphate to glucosamine-1-phosphate. The chain is Phosphoglucosamine mutase from Nitratiruptor sp. (strain SB155-2).